The primary structure comprises 347 residues: Anthranilate phosphoribosyltransferase (347 aa).

5-phospho-alpha-D-ribose 1-diphosphate-binding positions include Gly-82, 85–86 (GD), Thr-90, 92–95 (NIST), 110–118 (KHGNRAITS), and Thr-122. Gly-82 is a binding site for anthranilate. Position 94 (Ser-94) interacts with Mg(2+). Asn-113 is an anthranilate binding site. Anthranilate is bound at residue Arg-168. Asp-226 and Glu-227 together coordinate Mg(2+).

This sequence belongs to the anthranilate phosphoribosyltransferase family. As to quaternary structure, homodimer. Mg(2+) serves as cofactor.

It carries out the reaction N-(5-phospho-beta-D-ribosyl)anthranilate + diphosphate = 5-phospho-alpha-D-ribose 1-diphosphate + anthranilate. It functions in the pathway amino-acid biosynthesis; L-tryptophan biosynthesis; L-tryptophan from chorismate: step 2/5. Its function is as follows. Catalyzes the transfer of the phosphoribosyl group of 5-phosphorylribose-1-pyrophosphate (PRPP) to anthranilate to yield N-(5'-phosphoribosyl)-anthranilate (PRA). This chain is Anthranilate phosphoribosyltransferase, found in Caulobacter sp. (strain K31).